A 376-amino-acid polypeptide reads, in one-letter code: Transmembrane protein 43 homolog (376 aa).

At 1–10 (MASLSETLRS) the chain is on the cytoplasmic side. A helical membrane pass occupies residues 11–31 (HWPIALFGVILFVAGGTELYW). Topologically, residues 32 to 277 (NEGRAVHNMM…EVFRLEARAQ (246 aa)) are lumenal. The helical transmembrane segment at 278-298 (VLHTWWWRFVGWLLIFFGVTC) threads the bilayer. The Cytoplasmic portion of the chain corresponds to 299–323 (NTKILRLLFVRVPLLVALAPDPQFP). Helical transmembrane passes span 324–344 (VTGN…VAWI) and 345–365 (LHRP…YVWF). Over 366–376 (TRNLVDYHRLD) the chain is Cytoplasmic.

Belongs to the TMEM43 family.

The protein localises to the endoplasmic reticulum membrane. Its subcellular location is the nucleus envelope. In terms of biological role, involved in lipid metabolism and utilization. This Drosophila melanogaster (Fruit fly) protein is Transmembrane protein 43 homolog.